Here is a 589-residue protein sequence, read N- to C-terminus: F-box only protein 24 (589 aa).

The F-box domain occupies 23 to 69 (PISVQLFPPELVEHIVSFLPVKDLVALGQTCHYFHEVCDAEGVWRRI). Residues 386–435 (GRIFMQGNNRYGQLGTGDKMDRGEPTQVHYLQRPIALWCGLNHSLVLSQT) form an RCC1 repeat. Positions 506–526 (VGGSPEPSQGAGAPQDPGGTA) are disordered.

As to quaternary structure, directly interacts with SKP1 and CUL1.

Substrate-recognition component of the SCF (SKP1-CUL1-F-box protein)-type E3 ubiquitin ligase complex. This chain is F-box only protein 24 (Fbxo24), found in Mus musculus (Mouse).